The chain runs to 677 residues: UPF0652 protein (677 aa).

The B box-type; atypical zinc-finger motif lies at 38–84 (ETPGMCCECTDQPAEVVCLQCQDELCTVCSTSLHRRGSRRSHIFKNK). Zn(2+) contacts are provided by C43, C46, C66, and H71. Residues 91–111 (YDELNKRDRQPPLHGKEDEKV) show a composition bias toward basic and acidic residues. Disordered stretches follow at residues 91–142 (YDEL…NNNI) and 156–192 (LNPL…IDED). Residues 113–126 (NNNNNNNNTNNTNN) show a composition bias toward low complexity. A compositionally biased stretch (polar residues) spans 163–178 (HTNQQRNGGGSNNHQI).

It belongs to the UPF0652 family.

The polypeptide is UPF0652 protein (Dictyostelium discoideum (Social amoeba)).